The following is a 357-amino-acid chain: F-box only protein 25 (357 aa).

Residues 1-83 (MPFLGQDWRS…NDTNTQCFYR (83 aa)) form an interaction with beta-actin region. Residues 225–273 (LTLSDLPVHMLSNILYRFSDGWDIVTLGQVTPTLSALSEDRQLWKKLCQ) enclose the F-box domain.

As to quaternary structure, part of a SCF (SKP1-cullin-F-box) protein ligase complex consisting of FBXO25, SKP1, CUL1 and RBX1. Interacts directly with SKP1 and CUL1. Interacts (via C-terminus) with beta-actin (via N-terminus).

Its subcellular location is the nucleus. Its pathway is protein modification; protein ubiquitination. Functionally, substrate-recognition component of the SCF (SKP1-CUL1-F-box protein)-type E3 ubiquitin ligase complex. May play a role in accumulation of expanded polyglutamine (polyQ) protein huntingtin (HTT). This Bos taurus (Bovine) protein is F-box only protein 25 (FBXO25).